Here is a 546-residue protein sequence, read N- to C-terminus: ATP-dependent rRNA helicase RRP3 (546 aa).

The disordered stretch occupies residues Met-1 to Ala-108. Composition is skewed to acidic residues over residues Ser-60 to Asp-77 and Glu-94 to Glu-103. The Q motif motif lies at Lys-115–Thr-143. One can recognise a Helicase ATP-binding domain in the interval Ile-146–Val-318. Residue Ala-159–Thr-166 coordinates ATP. A DEAD box motif is present at residues Asp-265–Asp-268. One can recognise a Helicase C-terminal domain in the interval Tyr-342–Met-490. Residues Val-504–Lys-515 are compositionally biased toward basic and acidic residues. The disordered stretch occupies residues Val-504–Gly-546. A compositionally biased stretch (gly residues) spans Gly-519–Gly-530. Basic and acidic residues predominate over residues Gly-536–Gly-546.

Belongs to the DEAD box helicase family. DDX47/RRP3 subfamily. In terms of assembly, interacts with the SSU processome.

The protein resides in the nucleus. The enzyme catalyses ATP + H2O = ADP + phosphate + H(+). Functionally, ATP-dependent rRNA helicase required for pre-ribosomal RNA processing. Involved in the maturation of the 35S-pre-rRNA and to its cleavage to mature 18S rRNA. The protein is ATP-dependent rRNA helicase RRP3 of Phaeosphaeria nodorum (strain SN15 / ATCC MYA-4574 / FGSC 10173) (Glume blotch fungus).